A 373-amino-acid chain; its full sequence is MNGTISVLLAGGGTAGHVEPAMAVADALAALEPGVRITALGTERGLETRLVPERGYALELITPVPLPRKLSGDLARLPMRVRRAVRETREILDTVHADVVIGFGGYVALPAYLAARRNRVPIVVHEANASAGLANKVGARFARRVLSAVADPGLGRVEVVGTPVRSSITELDRAALRAEARAHFGFADDARVLLVFGGSQGARSLNNVVSGAAKALAAAGISVLHAYGAKNTLELPDPAPGDPPYVAVPYLSRMDLAYAAADLAICRSGAMTVAEVTAVGLPAVYVPLPIGNGEQRLNARPVVETGGGLVVDDADLSPQFVADTVVPLLTDTGRLQTMTAGAALSGHRDAARHVAHVALDVAREAAGGRKGVR.

UDP-N-acetyl-alpha-D-glucosamine-binding positions include 14 to 16 (TAG), N128, R165, S199, and Q295.

Belongs to the glycosyltransferase 28 family. MurG subfamily.

The protein resides in the cell membrane. It catalyses the reaction di-trans,octa-cis-undecaprenyl diphospho-N-acetyl-alpha-D-muramoyl-L-alanyl-D-glutamyl-meso-2,6-diaminopimeloyl-D-alanyl-D-alanine + UDP-N-acetyl-alpha-D-glucosamine = di-trans,octa-cis-undecaprenyl diphospho-[N-acetyl-alpha-D-glucosaminyl-(1-&gt;4)]-N-acetyl-alpha-D-muramoyl-L-alanyl-D-glutamyl-meso-2,6-diaminopimeloyl-D-alanyl-D-alanine + UDP + H(+). The protein operates within cell wall biogenesis; peptidoglycan biosynthesis. In terms of biological role, cell wall formation. Catalyzes the transfer of a GlcNAc subunit on undecaprenyl-pyrophosphoryl-MurNAc-pentapeptide (lipid intermediate I) to form undecaprenyl-pyrophosphoryl-MurNAc-(pentapeptide)GlcNAc (lipid intermediate II). The chain is UDP-N-acetylglucosamine--N-acetylmuramyl-(pentapeptide) pyrophosphoryl-undecaprenol N-acetylglucosamine transferase from Mycobacterium sp. (strain KMS).